The chain runs to 512 residues: 2,3-bisphosphoglycerate-independent phosphoglycerate mutase (512 aa).

Asp14 and Ser64 together coordinate Mn(2+). The active-site Phosphoserine intermediate is the Ser64. Substrate is bound by residues His125, 155–156, Arg187, Arg193, 259–262, and Lys332; these read RD and RADR. Residues Asp399, His403, Asp440, His441, and His459 each contribute to the Mn(2+) site.

Belongs to the BPG-independent phosphoglycerate mutase family. In terms of assembly, monomer. The cofactor is Mn(2+).

It carries out the reaction (2R)-2-phosphoglycerate = (2R)-3-phosphoglycerate. The protein operates within carbohydrate degradation; glycolysis; pyruvate from D-glyceraldehyde 3-phosphate: step 3/5. Catalyzes the interconversion of 2-phosphoglycerate and 3-phosphoglycerate. This chain is 2,3-bisphosphoglycerate-independent phosphoglycerate mutase, found in Vesicomyosocius okutanii subsp. Calyptogena okutanii (strain HA).